A 295-amino-acid chain; its full sequence is Caffeine dehydrogenase subunit beta (295 aa).

Residues 1 to 178 form the FAD-binding PCMH-type domain; the sequence is MKPTAFDYIR…CEIRIPVPSQ (178 aa). Residues 32-36 and 111-115 each bind FAD; these read AGGQS and TLGGN.

In terms of assembly, heterotrimer composed of an alpha (CdhA), a beta (CdhB) and a gamma (CdhC) subunit.

The catalysed reaction is caffeine + a ubiquinone + H2O = 1,3,7-trimethylurate + a ubiquinol. The enzyme catalyses ubiquinone-0 + caffeine + H2O = ubiquinol-0 + 1,3,7-trimethylurate. It carries out the reaction theobromine + a ubiquinone + H2O = 3,7-dimethylurate + a ubiquinol. Component of the caffeine dehydrogenase complex that catalyzes the hydrolytical oxidation of 1,3,7-trimethylxanthine (caffeine) by incorporation of an oxygen atom originating from a water molecule into position C-8 to produce 1,3,7-trimethyluric acid (TMU). Coenzyme Q0 (ubiquinone-0) is the preferred electron acceptor and, to a lesser extent, coenzyme Q2 (ubiquinone-2) can also be used, but oxygen and NAD(P)(+) cannot. Is involved in a caffeine degradation pathway that allows Pseudomonas sp. strain CBB1 to grow on caffeine as the sole carbon and nitrogen source. Is also active with theobromine as substrate, but shows a very poor activity with theophylline and is not active with xanthine, 3-methylxanthine, 7-methylxanthine, TMU, and 3,7-dimethylurate. This Pseudomonas sp. (strain CBB1) protein is Caffeine dehydrogenase subunit beta.